The sequence spans 539 residues: Protein PNS1 (539 aa).

The segment at 1 to 38 is disordered; it reads MPLNEKYERPPQPPPAYDPNHRPPSSSENSAAANVNDG. Residues 1-81 are Cytoplasmic-facing; that stretch reads MPLNEKYERP…NDNKPRWNDW (81 aa). Residues 25–36 show a composition bias toward low complexity; sequence SSSENSAAANVN. The helical transmembrane segment at 82–102 threads the bilayer; that stretch reads PFTIFFLCTVGGFIAIAAITL. Topologically, residues 103-129 are extracellular; that stretch reads RAWSQTYSSTGSGIYDGVNTGTLNTNA. The chain crosses the membrane as a helical span at residues 130-150; it reads AILLVFVCIIALVFSVLGLTL. Topologically, residues 151-157 are cytoplasmic; it reads CRIFPKQ. A helical membrane pass occupies residues 158–178; sequence FIYCGMVINLVASLGTAIMYM. Topologically, residues 179–182 are extracellular; it reads SLRY. A helical membrane pass occupies residues 183 to 203; it reads WSAGIVFLVFTFMTAWCYWGM. Over 204-226 the chain is Cytoplasmic; that stretch reads RSRIPLSVAVLKVVVDAMKKCPQ. The chain crosses the membrane as a helical span at residues 227–247; the sequence is IFFVSFVGALVASAFGFLFSA. Topologically, residues 248-274 are extracellular; the sequence is VIVATYIKYDPNSSNGGCDVSGGSCSH. Residue N259 is glycosylated (N-linked (GlcNAc...) asparagine). A helical membrane pass occupies residues 275-295; sequence SKLIGVLVVVFFCGYYISEVI. The Cytoplasmic portion of the chain corresponds to 296 to 332; it reads RNVIHCVISGVFGSWYYMSKSDQGMPRWPAFGALKRA. The chain crosses the membrane as a helical span at residues 333–353; sequence MTYSFGSICFGSLLVALIDLL. Residues 354 to 371 lie on the Extracellular side of the membrane; that stretch reads RQILQMIRHDVTSSGGGQ. Residues 372 to 392 traverse the membrane as a helical segment; sequence IAIQILFMVFDWIIGFLKWLA. Residues 393–436 lie on the Cytoplasmic side of the membrane; the sequence is EYFNHYAYSFIALYGKPYLRAAKETWYMLREKGMDALINDNLIN. Residues 437–457 traverse the membrane as a helical segment; the sequence is IALGLFSMFASYMTALFTFLY. Residues 458–473 lie on the Extracellular side of the membrane; sequence LRFTSPQYNSNGAYNG. A helical transmembrane segment spans residues 474 to 494; it reads ALMAFSFVIALQICNIATEAI. Over 495–539 the chain is Cytoplasmic; the sequence is RSGTATFFVALGNDPEVFHHSYPHRFDEIFRAYPDVLRKLSHQNV.

It belongs to the CTL (choline transporter-like) family.

Its subcellular location is the cell membrane. Probably involved in transport through the plasma membrane. The polypeptide is Protein PNS1 (PNS1) (Saccharomyces cerevisiae (strain ATCC 204508 / S288c) (Baker's yeast)).